We begin with the raw amino-acid sequence, 61 residues long: Small ribosomal subunit protein uS14 (61 aa).

The Zn(2+) site is built by Cys24, Cys27, Cys40, and Cys43.

It belongs to the universal ribosomal protein uS14 family. Zinc-binding uS14 subfamily. In terms of assembly, part of the 30S ribosomal subunit. Contacts proteins S3 and S10. Zn(2+) is required as a cofactor.

Binds 16S rRNA, required for the assembly of 30S particles and may also be responsible for determining the conformation of the 16S rRNA at the A site. The chain is Small ribosomal subunit protein uS14 from Leptospira biflexa serovar Patoc (strain Patoc 1 / Ames).